A 753-amino-acid chain; its full sequence is 5-methyltetrahydropteroyltriglutamate--homocysteine methyltransferase (753 aa).

Residues 17 to 20 and Lys-117 contribute to the 5-methyltetrahydropteroyltri-L-glutamate site; that span reads RELK. Residues 431 to 433 and Glu-484 each bind L-homocysteine; that span reads IGS. L-methionine contacts are provided by residues 431–433 and Glu-484; that span reads IGS. 5-methyltetrahydropteroyltri-L-glutamate contacts are provided by residues 515–516 and Trp-561; that span reads RC. Residue Asp-599 coordinates L-homocysteine. Asp-599 contributes to the L-methionine binding site. Residue Glu-605 participates in 5-methyltetrahydropteroyltri-L-glutamate binding. Zn(2+) contacts are provided by His-641, Cys-643, and Glu-665. His-694 functions as the Proton donor in the catalytic mechanism. Cys-726 is a binding site for Zn(2+).

The protein belongs to the vitamin-B12 independent methionine synthase family. Requires Zn(2+) as cofactor.

It carries out the reaction 5-methyltetrahydropteroyltri-L-glutamate + L-homocysteine = tetrahydropteroyltri-L-glutamate + L-methionine. Its pathway is amino-acid biosynthesis; L-methionine biosynthesis via de novo pathway; L-methionine from L-homocysteine (MetE route): step 1/1. Functionally, catalyzes the transfer of a methyl group from 5-methyltetrahydrofolate to homocysteine resulting in methionine formation. This chain is 5-methyltetrahydropteroyltriglutamate--homocysteine methyltransferase, found in Enterobacter sp. (strain 638).